The chain runs to 322 residues: Acetyl-coenzyme A carboxylase carboxyl transferase subunit alpha 2 (322 aa).

Residues 37 to 294 (EINRLSARSE…KRVLQESLRN (258 aa)) form the CoA carboxyltransferase C-terminal domain.

It belongs to the AccA family. As to quaternary structure, acetyl-CoA carboxylase is a heterohexamer composed of biotin carboxyl carrier protein (AccB), biotin carboxylase (AccC) and two subunits each of ACCase subunit alpha (AccA) and ACCase subunit beta (AccD).

The protein localises to the cytoplasm. It carries out the reaction N(6)-carboxybiotinyl-L-lysyl-[protein] + acetyl-CoA = N(6)-biotinyl-L-lysyl-[protein] + malonyl-CoA. It participates in lipid metabolism; malonyl-CoA biosynthesis; malonyl-CoA from acetyl-CoA: step 1/1. In terms of biological role, component of the acetyl coenzyme A carboxylase (ACC) complex. First, biotin carboxylase catalyzes the carboxylation of biotin on its carrier protein (BCCP) and then the CO(2) group is transferred by the carboxyltransferase to acetyl-CoA to form malonyl-CoA. Its function is as follows. Confers resistance to the endogenous polyketide antibiotic thailandamide. Can replace the endogenous gene in S.typhimurium, conferring slow growth and resistance to thailandamide. Can also replace the endogenous gene in E.coli, conferring resistance to thailandamide. The protein is Acetyl-coenzyme A carboxylase carboxyl transferase subunit alpha 2 of Burkholderia thailandensis (strain ATCC 700388 / DSM 13276 / CCUG 48851 / CIP 106301 / E264).